We begin with the raw amino-acid sequence, 352 residues long: Histidinol-phosphate aminotransferase (352 aa).

At lysine 221 the chain carries N6-(pyridoxal phosphate)lysine.

This sequence belongs to the class-II pyridoxal-phosphate-dependent aminotransferase family. Histidinol-phosphate aminotransferase subfamily. As to quaternary structure, homodimer. The cofactor is pyridoxal 5'-phosphate.

It carries out the reaction L-histidinol phosphate + 2-oxoglutarate = 3-(imidazol-4-yl)-2-oxopropyl phosphate + L-glutamate. The protein operates within amino-acid biosynthesis; L-histidine biosynthesis; L-histidine from 5-phospho-alpha-D-ribose 1-diphosphate: step 7/9. This Staphylococcus aureus (strain Mu3 / ATCC 700698) protein is Histidinol-phosphate aminotransferase.